Consider the following 339-residue polypeptide: UPF0324 membrane protein SpyM3_0740 (339 aa).

A run of 9 helical transmembrane segments spans residues 7 to 24 (KLPG…AWYL), 28 to 50 (FPII…FYHH), 57 to 79 (GISF…GLNL), 84 to 106 (AVGM…VAYG), 118 to 140 (ATLV…APVI), 150 to 172 (AISV…GQLL), 256 to 275 (FILF…SLGV), 290 to 307 (FIVM…LVKL), and 314 to 336 (AILL…QLSL).

It belongs to the UPF0324 family.

Its subcellular location is the cell membrane. The polypeptide is UPF0324 membrane protein SpyM3_0740 (Streptococcus pyogenes serotype M3 (strain ATCC BAA-595 / MGAS315)).